The primary structure comprises 85 residues: Large ribosomal subunit protein bL27 (85 aa).

A disordered region spans residues 1–21; it reads MAHKKAGGSSRNGRDSEGRRL.

Belongs to the bacterial ribosomal protein bL27 family.

The chain is Large ribosomal subunit protein bL27 from Rhodospirillum rubrum (strain ATCC 11170 / ATH 1.1.1 / DSM 467 / LMG 4362 / NCIMB 8255 / S1).